The chain runs to 131 residues: Sec-independent protein translocase protein TatB (131 aa).

The helical transmembrane segment at 2–22 (FANIGWWEMLVLVMVGLVVLG) threads the bilayer. Residues 90 to 131 (DSLFTGDFDRPTPKKPDAAGSAGPDATEQIGAGPIPFDSDAT) are disordered. Residues 96-106 (DFDRPTPKKPD) show a composition bias toward basic and acidic residues.

This sequence belongs to the TatB family. As to quaternary structure, the Tat system comprises two distinct complexes: a TatABC complex, containing multiple copies of TatA, TatB and TatC subunits, and a separate TatA complex, containing only TatA subunits. Substrates initially bind to the TatABC complex, which probably triggers association of the separate TatA complex to form the active translocon.

The protein resides in the cell membrane. In terms of biological role, part of the twin-arginine translocation (Tat) system that transports large folded proteins containing a characteristic twin-arginine motif in their signal peptide across membranes. Together with TatC, TatB is part of a receptor directly interacting with Tat signal peptides. TatB may form an oligomeric binding site that transiently accommodates folded Tat precursor proteins before their translocation. This Mycobacterium tuberculosis (strain ATCC 25177 / H37Ra) protein is Sec-independent protein translocase protein TatB.